Here is a 75-residue protein sequence, read N- to C-terminus: uncharacterized protein (75 aa).

Residues 3 to 45 (TTVFLSNRSQAVRLPKAVALPENVKRVEVIAVGRTRIITPAGE) enclose the SpoVT-AbrB domain.

This sequence belongs to the VapB family.

This is an uncharacterized protein from Escherichia coli (strain K12).